A 419-amino-acid chain; its full sequence is L-cysteine:1D-myo-inositol 2-amino-2-deoxy-alpha-D-glucopyranoside ligase (419 aa).

Residues 1 to 20 (MRSWSVPEVPALPGRGPRVH) form a disordered region. Cysteine 44 is a Zn(2+) binding site. L-cysteinyl-5'-AMP is bound by residues 44–47 (CGIT), threonine 59, and 82–84 (NVT). The short motif at 46–56 (ITPYDATHLGH) is the 'HIGH' region element. The 'ERGGDP' region signature appears at 191 to 196 (ERGGDP). Tryptophan 232 contributes to the L-cysteinyl-5'-AMP binding site. Cysteine 236 contributes to the Zn(2+) binding site. 254 to 256 (GSD) provides a ligand contact to L-cysteinyl-5'-AMP. Histidine 261 contacts Zn(2+). Valine 289 is a binding site for L-cysteinyl-5'-AMP. Residues 295–299 (KMSKS) carry the 'KMSKS' region motif.

Belongs to the class-I aminoacyl-tRNA synthetase family. MshC subfamily. As to quaternary structure, monomer. The cofactor is Zn(2+).

It catalyses the reaction 1D-myo-inositol 2-amino-2-deoxy-alpha-D-glucopyranoside + L-cysteine + ATP = 1D-myo-inositol 2-(L-cysteinylamino)-2-deoxy-alpha-D-glucopyranoside + AMP + diphosphate + H(+). In terms of biological role, catalyzes the ATP-dependent condensation of GlcN-Ins and L-cysteine to form L-Cys-GlcN-Ins. The polypeptide is L-cysteine:1D-myo-inositol 2-amino-2-deoxy-alpha-D-glucopyranoside ligase (Kineococcus radiotolerans (strain ATCC BAA-149 / DSM 14245 / SRS30216)).